The primary structure comprises 240 residues: Guanine nucleotide exchange factor sopE2 (240 aa).

Residues 78–240 (LTSKTVKDFM…IANKYLQNAS (163 aa)) form a GEF catalytic domain region.

It belongs to the GEF (guanine exchange factor) SopE family.

Its subcellular location is the secreted. Its function is as follows. Activator for CDC42 by directly engaging this Rho GTPase and acting as potent guanine nucleotide exchange factor (GEF). This activation results in actin cytoskeleton rearrangements and stimulates membrane ruffling, promoting bacterial entry into non-phagocytic cells. Chaperone InvB is required for secretion, translocation and stabilization of intracellular levels of sopE2. The chain is Guanine nucleotide exchange factor sopE2 (sopE2) from Salmonella paratyphi A (strain ATCC 9150 / SARB42).